We begin with the raw amino-acid sequence, 301 residues long: Homeobox protein Nkx-2.6 (301 aa).

Positions 22-135 (ERSCPAASPH…QPKARQRRKP (114 aa)) are disordered. Positions 132–191 (RRKPRVLFSQAQVLALERRFKQQRYLSAPEREHLASALQLTSTQVKIWFQNRRYKCKRQR) form a DNA-binding region, homeobox.

The protein belongs to the NK-2 homeobox family.

The protein localises to the nucleus. Acts as a transcriptional activator. In conjunction with NKX2-5, may play a role in both pharyngeal and cardiac embryonic development. The polypeptide is Homeobox protein Nkx-2.6 (NKX2-6) (Homo sapiens (Human)).